We begin with the raw amino-acid sequence, 121 residues long: Flagellar protein FliT (121 aa).

The segment at 1–50 (MNNAPHLYFAWQQLVEKSQLMLRLATEEQWDELIASEMAYVNAVQEIAHL) is required for homodimerization. Residues 60–98 (MQEQLRPMLHLILDNESKVKQLLQIRMDELAKLVGQSSV) are fliD binding.

It belongs to the FliT family. In terms of assembly, homodimer. Interacts with FliD and FlhC.

Its subcellular location is the cytoplasm. The protein resides in the cytosol. In terms of biological role, dual-function protein that regulates the transcription of class 2 flagellar operons and that also acts as an export chaperone for the filament-capping protein FliD. As a transcriptional regulator, acts as an anti-FlhDC factor; it directly binds FlhC, thus inhibiting the binding of the FlhC/FlhD complex to class 2 promoters, resulting in decreased expression of class 2 flagellar operons. As a chaperone, effects FliD transition to the membrane by preventing its premature polymerization, and by directing it to the export apparatus. This chain is Flagellar protein FliT, found in Escherichia coli O17:K52:H18 (strain UMN026 / ExPEC).